The following is a 611-amino-acid chain: Dolabella-3,7-dien-18-ol synthase TPS06 (611 aa).

Residues Asp363, Asp367, Asp507, Thr511, and Glu515 each coordinate Mg(2+). Positions 363 to 367 match the DDXXD motif; degenerate motif; sequence DNTFD.

This sequence belongs to the terpene synthase family. Tpsa subfamily. Mg(2+) serves as cofactor. Requires Mn(2+) as cofactor. Predominantly expressed in flowers but also in stems, siliques, roots and leaves.

Its subcellular location is the cytoplasm. The catalysed reaction is (2E,6E,10E)-geranylgeranyl diphosphate + H2O = (3E,7E)-dolabella-3,7-dien-18-ol + diphosphate. The protein operates within secondary metabolite biosynthesis; terpenoid biosynthesis. Functionally, involved in terpene biosynthesis in roots. Possesses sesquiterpene (C15) synthase activity and diterpene (C20) synthase activity in vitro. Possesses dolabella-3,7-dien-18-ol synthase activity in vitro. Catalyzes the formation of dolabella-3,7-dien-18-ol from geranylgeranyl diphosphate. This Arabidopsis thaliana (Mouse-ear cress) protein is Dolabella-3,7-dien-18-ol synthase TPS06.